An 88-amino-acid polypeptide reads, in one-letter code: Putative defensin-like protein 264 (88 aa).

Positions 1 to 26 are cleaved as a signal peptide; sequence MEKMVLRKVVLLAILLSLSCLWVAKA. 3 disulfide bridges follow: cysteine 47–cysteine 65, cysteine 53–cysteine 70, and cysteine 57–cysteine 72.

The protein belongs to the DEFL family.

The protein resides in the secreted. The sequence is that of Putative defensin-like protein 264 from Arabidopsis thaliana (Mouse-ear cress).